The sequence spans 508 residues: 2,3-bisphosphoglycerate-independent phosphoglycerate mutase (508 aa).

Mn(2+)-binding residues include D14 and S64. Residue S64 is the Phosphoserine intermediate of the active site. Substrate contacts are provided by residues H125, 155 to 156 (RD), R187, R193, 259 to 262 (RADR), and K332. D399, H403, D440, H441, and H459 together coordinate Mn(2+).

It belongs to the BPG-independent phosphoglycerate mutase family. In terms of assembly, monomer. Requires Mn(2+) as cofactor.

The catalysed reaction is (2R)-2-phosphoglycerate = (2R)-3-phosphoglycerate. It participates in carbohydrate degradation; glycolysis; pyruvate from D-glyceraldehyde 3-phosphate: step 3/5. Its function is as follows. Catalyzes the interconversion of 2-phosphoglycerate and 3-phosphoglycerate. The chain is 2,3-bisphosphoglycerate-independent phosphoglycerate mutase from Pseudomonas fluorescens (strain Pf0-1).